The following is a 110-amino-acid chain: Putative caspase recruitment domain-containing protein 17P (110 aa).

Positions 1–91 (MADKVLKEKR…HLAGTLGLSA (91 aa)) constitute a CARD domain.

As to quaternary structure, interacts with pro-CASP1. In terms of tissue distribution, ubiquitous.

Its subcellular location is the cytoplasm. Its function is as follows. Regulator of procaspase-1/CASP1 activation implicated in the regulation of the proteolytic maturation of pro-IL-1beta/IL1B and its release during inflammation. Inhibits the release of IL1B in response to LPS in monocytes. However, unlike CASP1, do not induce NF-kappa-B activation. This Homo sapiens (Human) protein is Putative caspase recruitment domain-containing protein 17P (CARD17P).